A 596-amino-acid chain; its full sequence is Aspartate--tRNA(Asp/Asn) ligase (596 aa).

E182 provides a ligand contact to L-aspartate. Residues 206–209 (QLFK) form an aspartate region. Position 228 (R228) interacts with L-aspartate. Residues 228-230 (RDE) and Q237 contribute to the ATP site. H456 provides a ligand contact to L-aspartate. Residue E490 coordinates ATP. R497 is a binding site for L-aspartate. 542–545 (GLDR) lines the ATP pocket.

It belongs to the class-II aminoacyl-tRNA synthetase family. Type 1 subfamily. In terms of assembly, homodimer.

It is found in the cytoplasm. It catalyses the reaction tRNA(Asx) + L-aspartate + ATP = L-aspartyl-tRNA(Asx) + AMP + diphosphate. Its function is as follows. Aspartyl-tRNA synthetase with relaxed tRNA specificity since it is able to aspartylate not only its cognate tRNA(Asp) but also tRNA(Asn). Reaction proceeds in two steps: L-aspartate is first activated by ATP to form Asp-AMP and then transferred to the acceptor end of tRNA(Asp/Asn). The chain is Aspartate--tRNA(Asp/Asn) ligase from Syntrophotalea carbinolica (strain DSM 2380 / NBRC 103641 / GraBd1) (Pelobacter carbinolicus).